We begin with the raw amino-acid sequence, 624 residues long: Ceramide transfer protein (624 aa).

Over residues 1–11 (MSDNQSWNSSG) the composition is skewed to polar residues. The interval 1-24 (MSDNQSWNSSGSEEDPETESGPPV) is disordered. Residues 23–117 (PVERCGVLSK…WIDAIEQHKT (95 aa)) form the PH domain. Residue Ser126 is modified to Phosphoserine. Ser132 is modified (phosphoserine; by PKD). The residue at position 135 (Ser135) is a Phosphoserine. The stretch at 263–303 (IELMVKREDSWQKRLDKETEKKRRTEEAYKNAMTELKKKSH) forms a coiled coil. Ser315 is modified (phosphoserine). The FFAT signature appears at 321–327 (EFFDAVE). Residue Tyr372 is modified to Phosphotyrosine. Residues Ser373, Ser377, and Ser380 each carry the phosphoserine modification. Residues 389–618 (DVHRFSSQVE…FTSYVQEKTA (230 aa)) form the START domain. Glu472, Gln493, Asn530, and Tyr579 together coordinate an N-acylsphing-4-enine.

Interacts with VAPA and VAPB. Interaction with VAPB is less efficient than with VAPA. Interacts (via FFAT motif) with MOSPD2 (via MSP domain). In terms of processing, phosphorylation on Ser-132 decreases the affinity toward phosphatidylinositol 4-phosphate at Golgi membranes and reduces ceramide transfer activity. Inactivated by hyperphosphorylation of serine residues by CSNK1G2/CK1 that triggers dissociation from the Golgi complex, thus down-regulating ER-to-Golgi transport of ceramide and sphingomyelin synthesis. As to expression, widely expressed.

The protein resides in the cytoplasm. The protein localises to the golgi apparatus. It is found in the endoplasmic reticulum. The catalysed reaction is N-hexadecanoylsphing-4-enine(in) = N-hexadecanoylsphing-4-enine(out). In terms of biological role, shelters ceramides and diacylglycerol lipids inside its START domain and mediates the intracellular trafficking of ceramides and diacylglycerol lipids in a non-vesicular manner. The polypeptide is Ceramide transfer protein (Homo sapiens (Human)).